A 281-amino-acid chain; its full sequence is MIDLLGLDLDGTLLSRTRQINDPTKQALANLIQKKPSLKVMILTGRSLFSTLKYVQELNELCKKPLVEYFCCYGGAKLYQLNNNQPQEQYKFLIDSRQVKTVFEIVEQHKGLFLAYLDKPKAPYIILGANQFYAWLIKQFWYKQRCEYFKNDHLTDGILKINVYFACPLRLKKVYQIIKRQFQDTLNVVNFSKHLIEITHKDGNKGYAIEAIAKKQGLSLKRMAVIGDSLNDRSMFEKVQYSFAMSKSPDELKLLATEIGTKTNRFRFSSLVDLITEKIIN.

Aspartate 8 functions as the Nucleophile in the catalytic mechanism. Aspartate 8 serves as a coordination point for Mg(2+). Leucine 9 is a phosphate binding site. Aspartate 10 contributes to the Mg(2+) binding site. Residues 44-45 (TG) and lysine 205 each bind phosphate. Residues aspartate 228 and serine 229 each contribute to the Mg(2+) site. Asparagine 231 contacts phosphate.

It belongs to the HAD-like hydrolase superfamily. Cof family. It depends on Mg(2+) as a cofactor.

In Mycoplasma pneumoniae (strain ATCC 29342 / M129 / Subtype 1) (Mycoplasmoides pneumoniae), this protein is Putative phosphatase MPN_264.